A 137-amino-acid chain; its full sequence is Large ribosomal subunit protein uL16 (137 aa).

This sequence belongs to the universal ribosomal protein uL16 family. As to quaternary structure, part of the 50S ribosomal subunit.

In terms of biological role, binds 23S rRNA and is also seen to make contacts with the A and possibly P site tRNAs. The protein is Large ribosomal subunit protein uL16 of Aromatoleum aromaticum (strain DSM 19018 / LMG 30748 / EbN1) (Azoarcus sp. (strain EbN1)).